The sequence spans 879 residues: Protein P (879 aa).

A terminal protein domain (TP) region spans residues 1–184; the sequence is MHPFSRLFRN…GKPYSWEHRQ (184 aa). A spacer region spans residues 185–382; that stretch reads LVQHNGQQHK…YCIHHIVSSI (198 aa). Residues 304–345 are disordered; the sequence is SASNSNKSRSREKAYSSNSTSKRYSPPLNYEKSDFSSPGVRG. The tract at residues 383–724 is polymerase/reverse transcriptase domain (RT); it reads DDWGPCTVTG…YEELWPVVRQ (342 aa). Residues 393–634 enclose the Reverse transcriptase domain; sequence DVTIKSPRTP…NHLHFMGYVI (242 aa). Mg(2+) contacts are provided by Asp465, Asp585, and Asp586.

The protein belongs to the hepadnaviridae P protein family.

It carries out the reaction DNA(n) + a 2'-deoxyribonucleoside 5'-triphosphate = DNA(n+1) + diphosphate. The catalysed reaction is Endonucleolytic cleavage to 5'-phosphomonoester.. Its activity is regulated as follows. Activated by host HSP70 and HSP40 in vitro to be able to bind the epsilon loop of the pgRNA. Because deletion of the RNase H region renders the protein partly chaperone-independent, the chaperones may be needed indirectly to relieve occlusion of the RNA-binding site by this domain. Inhibited by several reverse-transcriptase inhibitors: Lamivudine, Adefovir and Entecavir. Multifunctional enzyme that converts the viral RNA genome into dsDNA in viral cytoplasmic capsids. This enzyme displays a DNA polymerase activity that can copy either DNA or RNA templates, and a ribonuclease H (RNase H) activity that cleaves the RNA strand of RNA-DNA heteroduplexes in a partially processive 3'- to 5'-endonucleasic mode. Neo-synthesized pregenomic RNA (pgRNA) are encapsidated together with the P protein, and reverse-transcribed inside the nucleocapsid. Initiation of reverse-transcription occurs first by binding the epsilon loop on the pgRNA genome, and is initiated by protein priming, thereby the 5'-end of (-)DNA is covalently linked to P protein. Partial (+)DNA is synthesized from the (-)DNA template and generates the relaxed circular DNA (RC-DNA) genome. After budding and infection, the RC-DNA migrates in the nucleus, and is converted into a plasmid-like covalently closed circular DNA (cccDNA). The activity of P protein does not seem to be necessary for cccDNA generation, and is presumably released from (+)DNA by host nuclear DNA repair machinery. The chain is Protein P from Woodchuck hepatitis B virus (isolate 1) (WHV).